The chain runs to 629 residues: Chaperone protein DnaK (629 aa).

Phosphothreonine; by autocatalysis is present on T195. 2 disordered regions span residues E514–N533 and L543–E629. Basic and acidic residues predominate over residues D555–M590. The span at T595 to G614 shows a compositional bias: low complexity. The segment covering R615–E629 has biased composition (basic and acidic residues).

Belongs to the heat shock protein 70 family.

Functionally, acts as a chaperone. In Deinococcus geothermalis (strain DSM 11300 / CIP 105573 / AG-3a), this protein is Chaperone protein DnaK.